The primary structure comprises 506 residues: NAD(P)H-quinone oxidoreductase subunit 2, chloroplastic (506 aa).

13 helical membrane passes run 15–35 (LIPEGIVACTILLVLLLDLVY), 39–59 (CHAWLAWVAMAGLSLASVLLG), 84–104 (LSLVFRAIIAMSCVLCILLSI), 113–133 (APSEFLVLIATASLGGMLVAG), 137–157 (LLMMFVSLETLGLASYLLTGY), 172–192 (LLVGAASSGLFLYGISWMYGI), 217–237 (CALALVLMTVGVGFKVAAAPF), 249–269 (PTPVVAFLSVGSKAAGFILAV), 283–303 (WHLIFTILSILSMIVGNFIAV), 339–359 (IVYLLIYLFMNLGAFACVILF), 382–402 (ALCLSLCLLSLGGIPPLAGFF), 418–438 (SLVWVGLITSVVSIYYYLSVV), and 471–491 (VGIFVCVLGSILVGVAGNSMV).

It belongs to the complex I subunit 2 family. In terms of assembly, NDH is composed of at least 16 different subunits, 5 of which are encoded in the nucleus.

It is found in the plastid. The protein resides in the chloroplast thylakoid membrane. The enzyme catalyses a plastoquinone + NADH + (n+1) H(+)(in) = a plastoquinol + NAD(+) + n H(+)(out). The catalysed reaction is a plastoquinone + NADPH + (n+1) H(+)(in) = a plastoquinol + NADP(+) + n H(+)(out). Functionally, NDH shuttles electrons from NAD(P)H:plastoquinone, via FMN and iron-sulfur (Fe-S) centers, to quinones in the photosynthetic chain and possibly in a chloroplast respiratory chain. The immediate electron acceptor for the enzyme in this species is believed to be plastoquinone. Couples the redox reaction to proton translocation, and thus conserves the redox energy in a proton gradient. This is NAD(P)H-quinone oxidoreductase subunit 2, chloroplastic from Nephroselmis olivacea (Green alga).